The chain runs to 154 residues: Ribonuclease H (154 aa).

The 142-residue stretch at 1–142 folds into the RNase H type-1 domain; it reads MRKQVEIFTD…CDELARAAAS (142 aa). The Mg(2+) site is built by Asp-10, Glu-48, Asp-70, and Asp-134.

It belongs to the RNase H family. Monomer. The cofactor is Mg(2+).

The protein localises to the cytoplasm. It catalyses the reaction Endonucleolytic cleavage to 5'-phosphomonoester.. Endonuclease that specifically degrades the RNA of RNA-DNA hybrids. This Pectobacterium atrosepticum (strain SCRI 1043 / ATCC BAA-672) (Erwinia carotovora subsp. atroseptica) protein is Ribonuclease H.